The following is an 828-amino-acid chain: Phenylalanine--tRNA ligase beta subunit (828 aa).

Residues 44–155 (GPVDGPLTVG…GTAEPGADGA (112 aa)) enclose the tRNA-binding domain. The B5 domain maps to 411–486 (WSPPAIQMPA…RLEGLEVIGS (76 aa)). Positions 464, 470, 473, and 474 each coordinate Mg(2+). The region spanning 734-827 (SPFPAVFQDV…AAEAVGAELR (94 aa)) is the FDX-ACB domain.

Belongs to the phenylalanyl-tRNA synthetase beta subunit family. Type 1 subfamily. Tetramer of two alpha and two beta subunits. It depends on Mg(2+) as a cofactor.

The protein resides in the cytoplasm. The catalysed reaction is tRNA(Phe) + L-phenylalanine + ATP = L-phenylalanyl-tRNA(Phe) + AMP + diphosphate + H(+). The protein is Phenylalanine--tRNA ligase beta subunit of Mycolicibacterium paratuberculosis (strain ATCC BAA-968 / K-10) (Mycobacterium paratuberculosis).